Reading from the N-terminus, the 173-residue chain is Photosystem I assembly protein Ycf3 (173 aa).

TPR repeat units lie at residues 35–68 (AYIYYRDGLAAQNNGDYSEALEYYKESLLLEENK), 72–105 (GETLKNMAIIYMSNGEEDLSIETYEKALVENPKQ), and 120–153 (GRNAEQNGDLDQRDIWFDKAAEVWSKAVRLYPGG).

Belongs to the Ycf3 family.

The protein localises to the cellular thylakoid membrane. In terms of biological role, essential for the assembly of the photosystem I (PSI) complex. May act as a chaperone-like factor to guide the assembly of the PSI subunits. The polypeptide is Photosystem I assembly protein Ycf3 (Prochlorococcus marinus (strain MIT 9301)).